Reading from the N-terminus, the 760-residue chain is Mitochondrial intermediate peptidase (760 aa).

The transit peptide at Met1–Phe19 directs the protein to the mitochondrion. Position 543 (His543) interacts with Zn(2+). Residue Glu544 is part of the active site. His547 is a Zn(2+) binding site.

This sequence belongs to the peptidase M3 family. Requires Zn(2+) as cofactor.

Its subcellular location is the mitochondrion matrix. The catalysed reaction is Release of an N-terminal octapeptide as second stage of processing of some proteins imported into the mitochondrion.. Functionally, cleaves proteins, imported into the mitochondrion, to their mature size. While most mitochondrial precursor proteins are processed to the mature form in one step by mitochondrial processing peptidase (MPP), the sequential cleavage by MIP of an octapeptide after initial processing by MPP is a required step for a subgroup of nuclear-encoded precursor proteins destined for the matrix or the inner membrane. In Leucoagaricus gongylophorus (Leaf-cutting ant fungus), this protein is Mitochondrial intermediate peptidase (OCT1).